A 183-amino-acid polypeptide reads, in one-letter code: Threonylcarbamoyl-AMP synthase (183 aa).

One can recognise a YrdC-like domain in the interval 1 to 183 (MNIQQIVEQL…LFTHQLFRQG (183 aa)).

This sequence belongs to the SUA5 family. TsaC subfamily.

It is found in the cytoplasm. It carries out the reaction L-threonine + hydrogencarbonate + ATP = L-threonylcarbamoyladenylate + diphosphate + H2O. In terms of biological role, required for the formation of a threonylcarbamoyl group on adenosine at position 37 (t(6)A37) in tRNAs that read codons beginning with adenine. Catalyzes the conversion of L-threonine, HCO(3)(-)/CO(2) and ATP to give threonylcarbamoyl-AMP (TC-AMP) as the acyladenylate intermediate, with the release of diphosphate. The polypeptide is Threonylcarbamoyl-AMP synthase (Pasteurella multocida (strain Pm70)).